A 665-amino-acid polypeptide reads, in one-letter code: Chaperone protein dnaK1 (665 aa).

Residue Thr198 is modified to Phosphothreonine; by autocatalysis. The segment at 634–665 (DDPWDNQMNSNSRNSRYGNSRDDDPWDNDYFL) is disordered. Low complexity predominate over residues 642–651 (NSNSRNSRYG).

This sequence belongs to the heat shock protein 70 family.

In terms of biological role, acts as a chaperone. The protein is Chaperone protein dnaK1 (dnaK1) of Prochlorococcus marinus subsp. pastoris (strain CCMP1986 / NIES-2087 / MED4).